We begin with the raw amino-acid sequence, 141 residues long: Ribonuclease P protein component (141 aa).

Disordered regions lie at residues R37–T56 and R114–K141. A compositionally biased stretch (basic and acidic residues) spans R114–S124.

The protein belongs to the RnpA family. As to quaternary structure, consists of a catalytic RNA component (M1 or rnpB) and a protein subunit.

The catalysed reaction is Endonucleolytic cleavage of RNA, removing 5'-extranucleotides from tRNA precursor.. Its function is as follows. RNaseP catalyzes the removal of the 5'-leader sequence from pre-tRNA to produce the mature 5'-terminus. It can also cleave other RNA substrates such as 4.5S RNA. The protein component plays an auxiliary but essential role in vivo by binding to the 5'-leader sequence and broadening the substrate specificity of the ribozyme. This Brucella melitensis biotype 2 (strain ATCC 23457) protein is Ribonuclease P protein component.